A 230-amino-acid polypeptide reads, in one-letter code: Somatolactin (230 aa).

An N-terminal signal peptide occupies residues 1 to 23 (MMTAVKQSGVWAVLLWPYLLAVS). Cystine bridges form between Cys-28–Cys-38, Cys-88–Cys-204, and Cys-221–Cys-229. Residues Asn-34 and Asn-144 are each glycosylated (N-linked (GlcNAc...) asparagine).

This sequence belongs to the somatotropin/prolactin family. As to expression, pituitary gland.

It is found in the secreted. The chain is Somatolactin from Solea senegalensis (Senegalese sole).